The following is a 183-amino-acid chain: uncharacterized protein (183 aa).

This is an uncharacterized protein from Acanthamoeba polyphaga (Amoeba).